Here is a 245-residue protein sequence, read N- to C-terminus: Complement C1q subcomponent subunit C (245 aa).

An N-terminal signal peptide occupies residues Met-1–Ala-28. A Collagen-like domain is found at Gly-31–Gly-112. A 4-hydroxyproline mark is found at Pro-36, Pro-39, Pro-42, Pro-45, and Pro-63. The tract at residues Pro-42 to Gln-119 is disordered. A 5-hydroxylysine modification is found at Lys-75. O-linked (Gal...) hydroxylysine glycosylation occurs at Lys-75. 4-hydroxyproline occurs at positions 81, 96, 99, and 105. Pro residues predominate over residues Asp-98–Glu-107. One can recognise a C1q domain in the interval Lys-115 to Asp-245. An intrachain disulfide couples Cys-179 to Cys-193.

Core component of the complement C1 complex, a calcium-dependent complex composed of 1 molecule of the C1Q subcomplex, 2 molecules of C1R and 2 molecules of C1S. The C1Q subcomplex is composed 18 subunits: 3 chains of C1QA, C1QB, and C1QC trimerize to form 6 collagen-like triple helices connected to six globular ligand-recognition modules (C1q domain). In terms of processing, O-linked glycans consist of Glc-Gal disaccharides bound to the oxygen atom of post-translationally added hydroxyl groups.

Its subcellular location is the secreted. It localises to the cell surface. With respect to regulation, the C1Q subcomplex is inhibited by sulfated molecules, such as triterpenoid sulfates, heparan sulfate, or chondroitin sulfates. In terms of biological role, core component of the complement C1 complex, a multiprotein complex that initiates the classical pathway of the complement system, a cascade of proteins that leads to phagocytosis and breakdown of pathogens and signaling that strengthens the adaptive immune system. The classical complement pathway is initiated by the C1Q subcomplex of the C1 complex, which specifically binds IgG or IgM immunoglobulins complexed with antigens, forming antigen-antibody complexes on the surface of pathogens: C1QA, together with C1QB and C1QC, specifically recognizes and binds the Fc regions of IgG or IgM via its C1q domain. Immunoglobulin-binding activates the proenzyme C1R, which cleaves C1S, initiating the proteolytic cascade of the complement system. The C1Q subcomplex is activated by a hexamer of IgG complexed with antigens, while it is activated by a pentameric IgM. The C1Q subcomplex also recognizes and binds phosphatidylserine exposed on the surface of cells undergoing programmed cell death, possibly promoting activation of the complement system. In Rattus norvegicus (Rat), this protein is Complement C1q subcomponent subunit C.